The primary structure comprises 160 residues: 6,7-dimethyl-8-ribityllumazine synthase (160 aa).

5-amino-6-(D-ribitylamino)uracil-binding positions include tryptophan 27, 59–61, and 81–83; these read AIE and VVI. 86–87 provides a ligand contact to (2S)-2-hydroxy-3-oxobutyl phosphate; that stretch reads QT. Histidine 89 (proton donor) is an active-site residue. Asparagine 114 is a binding site for 5-amino-6-(D-ribitylamino)uracil. Arginine 128 lines the (2S)-2-hydroxy-3-oxobutyl phosphate pocket.

It belongs to the DMRL synthase family. As to quaternary structure, homopentamer.

The catalysed reaction is (2S)-2-hydroxy-3-oxobutyl phosphate + 5-amino-6-(D-ribitylamino)uracil = 6,7-dimethyl-8-(1-D-ribityl)lumazine + phosphate + 2 H2O + H(+). The protein operates within cofactor biosynthesis; riboflavin biosynthesis; riboflavin from 2-hydroxy-3-oxobutyl phosphate and 5-amino-6-(D-ribitylamino)uracil: step 1/2. In terms of biological role, catalyzes the formation of 6,7-dimethyl-8-ribityllumazine by condensation of 5-amino-6-(D-ribitylamino)uracil with 3,4-dihydroxy-2-butanone 4-phosphate. This is the penultimate step in the biosynthesis of riboflavin. The polypeptide is 6,7-dimethyl-8-ribityllumazine synthase (Mycobacterium sp. (strain JLS)).